The sequence spans 1044 residues: Diacylglycerol lipase-alpha (1044 aa).

The Cytoplasmic portion of the chain corresponds to 1–22 (MPGIVVFRRRWSVGSDDLVLPA). The helical transmembrane segment at 23–43 (IFLFLLHTTWFVILSVVLFGL) threads the bilayer. Over 44 to 60 (VYNPHEACSLNLVDHGR) the chain is Extracellular. Residues 61–81 (GYLGILLSCMIAEMAIIWLSM) traverse the membrane as a helical segment. At 82–101 (RGGILYTEPRDSMQYVLYVR) the chain is on the cytoplasmic side. A helical transmembrane segment spans residues 102–122 (LAILVIEFIYAIVGIVWLTQY). Residues 123 to 136 (YTSCNDLTAKNVTL) lie on the Extracellular side of the membrane. Residue asparagine 133 is glycosylated (N-linked (GlcNAc...) asparagine). The helical transmembrane segment at 137–157 (GMVVCNWVVILSVCITVLCVF) threads the bilayer. At 158–1044 (DPTGRTFVKL…KQDDLVISAR (887 aa)) the chain is on the cytoplasmic side. Residues serine 472 and aspartate 524 each act as charge relay system in the active site. 11 positions are modified to phosphoserine: serine 728, serine 730, serine 733, serine 744, serine 784, serine 786, serine 808, serine 810, serine 835, serine 849, and serine 954. The interval 848–905 (LSKHSQDTQPLEAALGSGGVTPERPPSAANDEEEAAGGSEGGGVAPRGELALHNGRLG) is disordered. Residues 1013–1044 (QECLATDKIRTSTPTGHGASPTKQDDLVISAR) form a disordered region. Threonine 1025 carries the phosphothreonine modification.

The protein belongs to the AB hydrolase superfamily. Lipase family. As to quaternary structure, interacts (via C-terminal) with CAMK2A; leading to the phosphorylation and inhibition of DAGLA enzymatic activity. Interacts (via PPXXF motif) with HOMER1 and HOMER2; this interaction is required for DAGLA membrane localization. It depends on Ca(2+) as a cofactor. Phosphorylated at Ser-784 and Ser-810 by CAMK2A; phosphorylation by CAMK2A inhibits diacylglycerol lipase activity.

Its subcellular location is the cell membrane. It is found in the cell projection. The protein resides in the dendritic spine membrane. It localises to the postsynaptic density membrane. The protein localises to the early endosome membrane. The catalysed reaction is a 1,2-diacyl-sn-glycerol + H2O = a 2-acylglycerol + a fatty acid + H(+). It catalyses the reaction 1-octadecanoyl-2-(5Z,8Z,11Z,14Z-eicosatetraenoyl)-sn-glycerol + H2O = 2-(5Z,8Z,11Z,14Z-eicosatetraenoyl)-glycerol + octadecanoate + H(+). It carries out the reaction 1,2-di-(9Z-octadecenoyl)-sn-glycerol + H2O = 2-(9Z-octadecenoyl)-glycerol + (9Z)-octadecenoate + H(+). The enzyme catalyses 1-(9Z-octadecenoyl)-2-(5Z,8Z,11Z,14Z-eicosatetraenoyl)-sn-glycerol + H2O = 2-(5Z,8Z,11Z,14Z-eicosatetraenoyl)-glycerol + (9Z)-octadecenoate + H(+). The catalysed reaction is 1-(9Z-octadecenoyl)-2-octadecanoyl-sn-glycerol + H2O = 2-octadecanoylglycerol + (9Z)-octadecenoate + H(+). It catalyses the reaction 1-(9Z-octadecenoyl)-2-(9Z,12Z-octadecadienoyl)-sn-glycerol + H2O = 2-(9Z,12Z-octadecadienoyl)-glycerol + (9Z)-octadecenoate + H(+). It carries out the reaction 1-(9Z-octadecenoyl)-2-O-(5Z,8Z,11Z,14Z-eicosatetraenyl)-sn-glycerol + H2O = 2-O-(5Z,8Z,11Z,14Z)-eicosatetraenylglycerol + (9Z)-octadecenoate + H(+). Its activity is regulated as follows. Inhibited by 1,2,3-triazole urea covalent inhibitors KT172, DH376 and DO34. Inhibited by p-hydroxy-mercuri-benzoate and HgCl(2), but not to PMSF. Also inhibited by RHC80267. Diacylglycerol lipase activity is inhibited by the phosphorylation of Ser-784 and Ser-810 by CAMK2A. In terms of biological role, serine hydrolase that hydrolyzes arachidonic acid-esterified diacylglycerols (DAGs) to produce the principal endocannabinoid, 2-arachidonoylglycerol (2-AG). Preferentially hydrolyzes sn-1 fatty acids from diacylglycerols (DAG) that contain arachidonic acid (AA) esterified at the sn-2 position to biosynthesize 2-AG. Has negligible activity against other lipids including monoacylglycerols and phospholipids. Plays a key role in regulating 2-AG signaling in the CNS. Controls the activity of 2-AG as a retrograde messenger at neuronal synapses. Supports axonal growth during development and adult neurogenesis. Plays a role for eCB signaling in the physiological regulation of anxiety and depressive behaviors. Also regulates neuroinflammatory responses in the brain, in particular, LPS-induced microglial activation. The chain is Diacylglycerol lipase-alpha (Dagla) from Rattus norvegicus (Rat).